A 79-amino-acid chain; its full sequence is uncharacterized protein (79 aa).

Positions 10–60 constitute a SpoVT-AbrB domain; the sequence is EAVLTMDSKGQILLPKELRERAGLKAGDRLVAIAGCDENEEVCCLILVKAE.

This is an uncharacterized protein from Archaeoglobus fulgidus (strain ATCC 49558 / DSM 4304 / JCM 9628 / NBRC 100126 / VC-16).